A 410-amino-acid chain; its full sequence is Putative competence-damage inducible protein (410 aa).

This sequence belongs to the CinA family.

The sequence is that of Putative competence-damage inducible protein from Finegoldia magna (strain ATCC 29328 / DSM 20472 / WAL 2508) (Peptostreptococcus magnus).